Consider the following 585-residue polypeptide: Frizzled-5 (585 aa).

Residues 1–26 (MARPDPSAPPSLLLLLLAQLVGRAAA) form the signal peptide. The Extracellular portion of the chain corresponds to 27-238 (ASKAPVCQEI…PDERTFATFW (212 aa)). The region spanning 28–150 (SKAPVCQEIT…GDAEVLCMDY (123 aa)) is the FZ domain. Intrachain disulfides connect cysteine 33–cysteine 94, cysteine 41–cysteine 87, cysteine 78–cysteine 116, cysteine 105–cysteine 147, and cysteine 109–cysteine 133. N-linked (GlcNAc...) asparagine glycosylation is present at asparagine 47. The N-linked (GlcNAc...) asparagine glycan is linked to asparagine 151. Positions 156–182 (TTASPKSFPAKPTLPGPPGAPSSGGEC) are disordered. A helical transmembrane segment spans residues 239-259 (IGLWSVLCFISTSTTVATFLI). Over 260–270 (DMERFRYPERP) the chain is Cytoplasmic. A helical membrane pass occupies residues 271 to 291 (IIFLSACYLCVSLGFLVRLVV). The Extracellular segment spans residues 292–315 (GHASVACSREHSHIHYETTGPALC). Residues 316 to 336 (TVVFLLVYFFGMASSIWWVIL) traverse the membrane as a helical segment. Topologically, residues 337-358 (SLTWFLAAGMKWGNEAIAGYAQ) are cytoplasmic. The chain crosses the membrane as a helical span at residues 359–379 (YFHLAAWLIPSVKSITALALS). Residues 380-402 (SVDGDPVAGVCYVGNQNLNSLRG) lie on the Extracellular side of the membrane. A helical membrane pass occupies residues 403–423 (FVLGPLVLYLLVGTLFLLAGF). Topologically, residues 424–449 (VSLFRIRSVIKQGGTKTDKLEKLMIR) are cytoplasmic. Residues 450–470 (IGIFTLLYTVPASIVVACYLY) form a helical membrane-spanning segment. Residues 471–500 (EQHYRESWEAALTCACPGSDAGQPRAKPEY) lie on the Extracellular side of the membrane. A helical membrane pass occupies residues 501-521 (WVLMLKYFMCLVVGITSGVWI). At 522-585 (WSGKTLESWR…YHKQVSLSHV (64 aa)) the chain is on the cytoplasmic side. A Lys-Thr-X-X-X-Trp motif, mediates interaction with the PDZ domain of Dvl family members motif is present at residues 525 to 530 (KTLESW). The PDZ-binding signature appears at 583–585 (SHV).

This sequence belongs to the G-protein coupled receptor Fz/Smo family. Binding of unsaturated fatty acid molecules (via FZ domain) promotes homodimerization (via FZ domain). Interacts with WNT2B. Interacts with WNT7A. Interacts with GOPC. In terms of processing, ubiquitinated by RNF43 and ZNRF3, leading to its degradation by the proteasome.

It is found in the cell membrane. The protein resides in the golgi apparatus membrane. It localises to the synapse. Its subcellular location is the perikaryon. The protein localises to the cell projection. It is found in the dendrite. The protein resides in the axon. Functionally, receptor for Wnt proteins. Functions in the canonical Wnt/beta-catenin signaling pathway. In vitro activates WNT2, WNT10B, WNT5A, but not WNT2B or WNT4 signaling. In neurons, activation by WNT7A promotes formation of synapses. May be involved in transduction and intercellular transmission of polarity information during tissue morphogenesis and/or in differentiated tissues. Plays a role in yolk sac angiogenesis and in placental vascularization. Plays a role in ocular development. The chain is Frizzled-5 (Fzd5) from Rattus norvegicus (Rat).